The chain runs to 303 residues: Cathepsin B-like CP1 (303 aa).

The N-terminal stretch at 1–19 is a signal peptide; that stretch reads MALSLLLAVVCAKPLVSRA. A glycan (N-linked (GlcNAc...) asparagine) is linked at Asn-41. Intrachain disulfides connect Cys-92–Cys-119, Cys-102–Cys-145, and Cys-138–Cys-181. Cys-105 is an active-site residue. Active-site residues include His-249 and Asn-270.

It belongs to the peptidase C1 family.

It localises to the vacuole. Thiol protease which is required for parasite excystation and invasion of the proximal small intestine of the human host. This Giardia intestinalis (Giardia lamblia) protein is Cathepsin B-like CP1 (CP1).